The chain runs to 439 residues: Chitinase-like protein Idgf1 (439 aa).

An N-terminal signal peptide occupies residues 1 to 20 (MRFQLCYLLGLLSVTSLSHA). In terms of domain architecture, GH18 spans 22 to 439 (SNLICYYDST…IVRSIKYFMG (418 aa)). C26 and C53 are oxidised to a cystine. 3 N-linked (GlcNAc...) asparagine glycosylation sites follow: N122, N218, and N346. C340 and C423 are oxidised to a cystine.

Belongs to the glycosyl hydrolase 18 family. IDGF subfamily. Glycosylated.

Its subcellular location is the secreted. Cooperates with insulin-like peptides to stimulate the proliferation, polarization and motility of imaginal disk cells. May act by stabilizing the binding of insulin-like peptides to its receptor through a simultaneous interaction with both molecules to form a multiprotein signaling complex. The chain is Chitinase-like protein Idgf1 (Idgf1) from Drosophila yakuba (Fruit fly).